A 1398-amino-acid polypeptide reads, in one-letter code: Disease resistance protein RPV1 (1398 aa).

The 164-residue stretch at 22–185 (TTYDVFLSFR…EITNSIFRQL (164 aa)) folds into the TIR domain. Residues 31-36 (RGEDTR) and glycine 63 each bind NAD(+). The active site involves glutamate 97. An NB-ARC domain is found at 201–440 (SHVKEMILRL…KRSYDGLDRI (240 aa)). LRR repeat units follow at residues 203 to 225 (VKEM…IYGV), 423 to 447 (KADI…IFLD), 478 to 504 (LNDL…GWEI), 535 to 560 (IKSV…VFAK), 610 to 632 (SYEL…NFDG), 633 to 657 (GKLV…DLER), 678 to 702 (MPNL…VGNM), 703 to 726 (KKLT…IGDL), 728 to 750 (SLES…GGNM), 751 to 773 (KSLT…IGDL), 775 to 797 (SLES…GGNM), 798 to 820 (KSLT…IGDL), 822 to 844 (SLEI…GGNM), 845 to 867 (KSLK…IGDL), 869 to 891 (SLKY…GGNM), 892 to 914 (KRLL…IGDL), 916 to 938 (SLKY…GGNM), 939 to 961 (KSLT…IGDL), 963 to 985 (SLEI…GGNM), 986 to 1008 (KSLK…IGDL), 1010 to 1032 (SLKY…GGNM), 1033 to 1055 (KSLL…IGDL), 1079 to 1102 (MKSL…IGDL), and 1105 to 1128 (LEML…AIDA). A compositionally biased stretch (polar residues) spans 1315-1328 (QNSGDNGSALQDAN). The interval 1315–1336 (QNSGDNGSALQDANGNVHGANQ) is disordered. The LRR 25 repeat unit spans residues 1346 to 1369 (LDLLRNLSLGDNGSVVLEDTLGNR). The Nuclear localization signal signature appears at 1369-1373 (RKRRR).

Belongs to the disease resistance TIR-NB-LRR family. Homodimer; homodimerization is required for NAD(+) hydrolase (NADase) activity.

The protein localises to the nucleus. It is found in the cytoplasm. The enzyme catalyses NAD(+) + H2O = ADP-D-ribose + nicotinamide + H(+). Its function is as follows. Disease resistance (R) protein that confers resistance to multiple powdery and downy mildew by promoting cell death. Acts as a NAD(+) hydrolase (NADase): in response to activation, catalyzes cleavage of NAD(+) into ADP-D-ribose (ADPR) and nicotinamide; NAD(+) cleavage triggering a defense system that promotes cell death. In Vitis rotundifolia (Muscadine grape), this protein is Disease resistance protein RPV1.